The following is a 232-amino-acid chain: Ubiquinone biosynthesis O-methyltransferase (232 aa).

S-adenosyl-L-methionine-binding residues include Arg-36, Gly-55, Asp-76, and Met-120.

The protein belongs to the methyltransferase superfamily. UbiG/COQ3 family.

It catalyses the reaction a 3-demethylubiquinol + S-adenosyl-L-methionine = a ubiquinol + S-adenosyl-L-homocysteine + H(+). The catalysed reaction is a 3-(all-trans-polyprenyl)benzene-1,2-diol + S-adenosyl-L-methionine = a 2-methoxy-6-(all-trans-polyprenyl)phenol + S-adenosyl-L-homocysteine + H(+). It participates in cofactor biosynthesis; ubiquinone biosynthesis. Its function is as follows. O-methyltransferase that catalyzes the 2 O-methylation steps in the ubiquinone biosynthetic pathway. The polypeptide is Ubiquinone biosynthesis O-methyltransferase (Burkholderia cenocepacia (strain ATCC BAA-245 / DSM 16553 / LMG 16656 / NCTC 13227 / J2315 / CF5610) (Burkholderia cepacia (strain J2315))).